A 339-amino-acid polypeptide reads, in one-letter code: Caspase drICE (339 aa).

A propeptide spanning residues 1 to 28 (MDATNNGESADQVGIRVGNPEQPNDHTD) is cleaved from the precursor. Residues 1 to 45 (MDATNNGESADQVGIRVGNPEQPNDHTDALGSVGSGGAGSSGLVA) form a disordered region. Active-site residues include His169 and Cys211. A propeptide spanning residues 218-230 (GGVTMQRSQTETD) is cleaved from the precursor.

This sequence belongs to the peptidase C14A family. As to quaternary structure, heterotetramer that consists of two anti-parallel arranged heterodimers, each one formed by a 21 kDa (p21) and a 12 kDa (p12) subunit. Inactive pro-form can homodimerize. Dronc and Drice can form a stable complex. Interacts with Diap2 (via BIR3 domain) to form a stable complex. May interact with some isoforms of Dark.

Zymogen activated by proteolytic cleavage; cleaved by the initiator caspase Dronc upon apoptosis induction. Involved in the activation cascade of caspases responsible for apoptosis execution. Acts downstream of rpr. Cleaves baculovirus p35 and lamin DmO in vitro. This Drosophila melanogaster (Fruit fly) protein is Caspase drICE (Drice).